Consider the following 230-residue polypeptide: V-type proton ATPase subunit E (230 aa).

It belongs to the V-ATPase E subunit family. As to quaternary structure, V-ATPase is a heteromultimeric enzyme composed of a peripheral catalytic V1 complex (components A to H) attached to an integral membrane V0 proton pore complex (components: a, c, c', c'' and d).

Subunit of the peripheral V1 complex of vacuolar ATPase essential for assembly or catalytic function. V-ATPase is responsible for acidifying a variety of intracellular compartments in eukaryotic cells. In Citrus unshiu (Satsuma mandarin), this protein is V-type proton ATPase subunit E (VATE).